A 278-amino-acid chain; its full sequence is MMIHIHQDKKMSTRSNKKSTKTEKVAKATKPVENVEVSDNEVQEQAVKTKASGKKVTAKSTKQSGGKNAKSGSKSAKSGSKSAKSGSKTSKTQSGGKGDESRDRYFKLIDAKTGRSFGRYTGGTPKQAASKGFTKMIHKIKAEGGALPKNGTMKIYLRESTRGSPRKVYAYEATRKQLTEPQKIEIEGSDGKKKVITYRYRNVIHKVSAPLPNQLGGLKTSRSNKKSGETKKSGSRSSGSKRSAKPTKSAKNAKSTGNKKVSTKSAGAKKAPAAKASR.

Residues 1 to 11 (MMIHIHQDKKM) are compositionally biased toward basic and acidic residues. Disordered regions lie at residues 1–107 (MMIH…RYFK) and 206–278 (KVSA…KASR). Residues 62 to 94 (KQSGGKNAKSGSKSAKSGSKSAKSGSKTSKTQS) show a composition bias toward low complexity. Over residues 97-107 (KGDESRDRYFK) the composition is skewed to basic and acidic residues. The segment covering 249-260 (SAKNAKSTGNKK) has biased composition (polar residues). Residues 264–278 (KSAGAKKAPAAKASR) show a composition bias toward low complexity.

This is an uncharacterized protein from Acanthamoeba polyphaga mimivirus (APMV).